The primary structure comprises 371 residues: Cysteine proteinase EP-B 1 (371 aa).

The signal sequence occupies residues 1 to 28 (MGLLSKKLLVASMVAAVLAVAAVELCSA). Positions 29 to 133 (IPMEDKDLES…FMYAALNVSD (105 aa)) are cleaved as a propeptide — activation peptide. Asn130 carries N-linked (GlcNAc...) asparagine glycosylation. 3 cysteine pairs are disulfide-bonded: Cys155-Cys197, Cys189-Cys230, and Cys291-Cys343. Cys158 is an active-site residue. Residues His297 and Asn318 contribute to the active site.

It belongs to the peptidase C1 family.

The polypeptide is Cysteine proteinase EP-B 1 (Hordeum vulgare (Barley)).